The chain runs to 1150 residues: Fl(2)d-associated complex component (1150 aa).

Residues 1-10 show a composition bias toward basic and acidic residues; the sequence is MEKKAKESLR. Disordered stretches follow at residues 1–444, 477–710, 833–914, and 1034–1053; these read MEKK…EEER, QGRE…PPPL, ASED…MDTN, and KEQG…AKIP. The span at 11–20 shows a compositional bias: basic residues; that stretch reads RYKKAARHSA. A compositionally biased stretch (low complexity) spans 21–44; sequence THSSSSDSTSDSDSGSSSYSSTDS. The segment covering 47–69 has biased composition (gly residues); sequence GVGGVGVGVGVPGGAGGPGGSGS. Positions 72 to 97 are enriched in basic residues; it reads GHPHTHGHGHHPRSAERHHRKKKSSR. Low complexity predominate over residues 98–107; sequence RGGSSSGDEP. 2 stretches are compositionally biased toward basic residues: residues 110–144 and 162–175; these read SRRK…KKRA and AKLK…RLRA. Residues 122-147 adopt a coiled-coil conformation; sequence KKLVAKRNHIKRKLKEARLKKRAAAA. Residues 176-199 are compositionally biased toward basic and acidic residues; that stretch reads ASKEQRERDKLRVVQRDRERDHHR. Over residues 202–215 the composition is skewed to low complexity; that stretch reads SSRSPPSSSTTTTT. Residues 269 to 347 are a coiled coil; the sequence is PSLERERERE…KLRRQEEEEG (79 aa). Basic and acidic residues-rich tracts occupy residues 270–414, 428–444, and 492–529; these read SLER…DEMR, YAPR…EEER, and PDER…PEWE. The span at 537–558 shows a compositional bias: gly residues; the sequence is AGGGPGGPSGTPGRPGGFVGGP. Basic and acidic residues-rich tracts occupy residues 589 to 611 and 630 to 640; these read ERER…DRPD and WLEHDQREKPR. Over residues 660 to 669 the composition is skewed to pro residues; it reads PPAPSHPHPA. Positions 693 to 702 are enriched in basic and acidic residues; sequence GHGDHGERPG. Low complexity predominate over residues 851-861; the sequence is QSLNLNQSLSS. A compositionally biased stretch (acidic residues) spans 879-889; the sequence is ELSEISDSDDD. Residues 890–903 are compositionally biased toward basic and acidic residues; sequence ILNKTDKVRPKNEL. The span at 905–914 shows a compositional bias: acidic residues; the sequence is TETEQEMDTN.

This sequence belongs to the ZC3H13 family. In terms of assembly, component of the WMM complex, a N6-methyltransferase complex composed of a catalytic subcomplex, named MAC, and of an associated subcomplex, named MACOM. The MAC subcomplex is composed of Ime4/Mettl3 and Mettl14. The MACOM subcomplex is composed of fl(2)d, Flacc/Xio, Hakai, vir, and, in some cases of nito. As to expression, widely expressed during embryogenesis but shows enrichment in the neuroectoderm.

The protein localises to the nucleus. In terms of biological role, associated component of the WMM complex, a complex that mediates N6-methyladenosine (m6A) methylation of mRNAs, a modification that plays a role in the efficiency of mRNA splicing and is required for sex determination. In the WMM complex, acts as a key regulator of m6A methylation by bridging fl(2)d to the RNA-binding component nito. Required for sex determination and dosage compensation via Sxl alternative splicing: m6A methylation acts as a key regulator of Sxl pre-mRNA and promotes female-specific alternative splicing of Sxl, which determines female physiognomy. The polypeptide is Fl(2)d-associated complex component (Drosophila melanogaster (Fruit fly)).